The following is a 492-amino-acid chain: GTPase Der (492 aa).

EngA-type G domains lie at 3–166 (PVVA…MDDV) and 205–378 (IKLA…DSST). GTP-binding positions include 9-16 (GRPNVGKS), 56-60 (DTGGI), 118-121 (NKTD), 211-218 (GRPNVGKS), 258-262 (DTAGV), and 323-326 (NKWD). The region spanning 379–463 (RRVSTALLTR…PIRIQFKEGA (85 aa)) is the KH-like domain.

Belongs to the TRAFAC class TrmE-Era-EngA-EngB-Septin-like GTPase superfamily. EngA (Der) GTPase family. Associates with the 50S ribosomal subunit.

In terms of biological role, GTPase that plays an essential role in the late steps of ribosome biogenesis. The polypeptide is GTPase Der (Cronobacter sakazakii (strain ATCC BAA-894) (Enterobacter sakazakii)).